Consider the following 355-residue polypeptide: MLSIFVTFLGAFLTLIVMRPLANWIGLVDKPNYRKRHQGTIPLIGGASLFVGNLCYYLMEWDQLRLPYLYLFSIFVLLAIGILDDRFDISPFLRAGIQAILAILMIDLGNIYLDHLGQILGPFQLTLGSIGLIITVFATIAIINAFNMIDGIDGLLGGLSCVSFAAIGILMYRDGQMDMAHWSFALIVSILPYLMLNLGIPFGPKYKVFMGDAGSTLIGFTIIWILLLSTQGKGHPMNPVTALWIIAIPLIDMVAIIYRRVRKGKSPFRPDRLHVHHLMVRAGLTSRQAFLLITFVSAVCATIGILGEVYYVNEWAMFVGFFILFFLYVYSITHAWRITRWVRRMKRRAKRLKKA.

Helical transmembrane passes span 1 to 21, 39 to 59, 63 to 83, 123 to 143, 182 to 202, 208 to 228, 237 to 257, and 315 to 335; these read MLSIFVTFLGAFLTLIVMRPL, GTIPLIGGASLFVGNLCYYLM, QLRLPYLYLFSIFVLLAIGIL, FQLTLGSIGLIITVFATIAII, WSFALIVSILPYLMLNLGIPF, VFMGDAGSTLIGFTIIWILLL, MNPVTALWIIAIPLIDMVAII, and WAMFVGFFILFFLYVYSITHA.

It belongs to the glycosyltransferase 4 family. WecA subfamily. The cofactor is Mg(2+). Mn(2+) is required as a cofactor.

The protein resides in the cell inner membrane. It catalyses the reaction di-trans,octa-cis-undecaprenyl phosphate + UDP-N-acetyl-alpha-D-glucosamine = N-acetyl-alpha-D-glucosaminyl-di-trans,octa-cis-undecaprenyl diphosphate + UMP. The protein operates within bacterial outer membrane biogenesis; LPS O-antigen biosynthesis. Functionally, catalyzes the transfer of the GlcNAc-1-phosphate moiety from UDP-GlcNAc onto the carrier lipid undecaprenyl phosphate (C55-P), yielding GlcNAc-pyrophosphoryl-undecaprenyl (GlcNAc-PP-C55). The protein is Undecaprenyl-phosphate alpha-N-acetylglucosaminyl 1-phosphate transferase of Haemophilus influenzae (strain ATCC 51907 / DSM 11121 / KW20 / Rd).